The sequence spans 191 residues: Flavin reductase (NADH) (191 aa).

46 to 52 (YGLTCSA) serves as a coordination point for FAD. Serine 55 is a binding site for NAD(+). 72–73 (RV) is an FAD binding site. Residues histidine 144 and 166-169 (YWRR) each bind NAD(+).

Belongs to the non-flavoprotein flavin reductase family.

The enzyme catalyses a reduced flavin + NAD(+) = an oxidized flavin + NADH + 2 H(+). In terms of biological role, catalyzes the reduction of flavin by NADH. Subsequently, the reduced flavins is transferred to the tetracycline 7-halogenase CtcP. This chain is Flavin reductase (NADH), found in Kitasatospora aureofaciens (Streptomyces aureofaciens).